The primary structure comprises 266 residues: Ribonuclease 3 (266 aa).

A disordered region spans residues 1-35; sequence MMDESADIKPVPTSEDVAAPSGTEPVAPAPKKKRA. The RNase III domain maps to 43–171; the sequence is MAAIEQRLGH…VIGAVYLDGG (129 aa). Position 84 (Glu84) interacts with Mg(2+). Residue Asp88 is part of the active site. The Mg(2+) site is built by Asp157 and Glu160. The active site involves Glu160. One can recognise a DRBM domain in the interval 196–265; sequence DPKTVLQEWA…ASAMIVREGV (70 aa).

The protein belongs to the ribonuclease III family. Homodimer. It depends on Mg(2+) as a cofactor.

The protein resides in the cytoplasm. It catalyses the reaction Endonucleolytic cleavage to 5'-phosphomonoester.. Its function is as follows. Digests double-stranded RNA. Involved in the processing of primary rRNA transcript to yield the immediate precursors to the large and small rRNAs (23S and 16S). Processes some mRNAs, and tRNAs when they are encoded in the rRNA operon. Processes pre-crRNA and tracrRNA of type II CRISPR loci if present in the organism. This chain is Ribonuclease 3, found in Nitrobacter winogradskyi (strain ATCC 25391 / DSM 10237 / CIP 104748 / NCIMB 11846 / Nb-255).